The sequence spans 485 residues: Ras-like GTPase YcjX (485 aa).

The short motif at 33 to 40 (GLSGAGKT) is the Walker A motif element. GTP is bound by residues serine 35, glycine 36, glycine 38, lysine 39, threonine 40, alanine 41, tryptophan 110, serine 113, threonine 114, arginine 115, lysine 355, aspartate 357, and histidine 358. GDP is bound by residues glycine 36, glycine 38, lysine 39, threonine 40, alanine 41, tryptophan 110, serine 113, and threonine 114. 6 residues coordinate GDP: lysine 355, aspartate 357, histidine 358, serine 395, alanine 396, and isoleucine 397. Residue isoleucine 397 coordinates GTP.

As to quaternary structure, monomer in solution. Mg(2+) is required as a cofactor.

The enzyme catalyses GTP + H2O = GDP + phosphate + H(+). Its activity is regulated as follows. Alternates between an inactive form bound to GDP and an active form bound to GTP. Likely activated by a guanine nucleotide-exchange factor (GEF). Its function is as follows. Binds GTP and GDP. Has intrinsic GTPase activity. Does not hydrolyze ATP. May act as a transducer of stress responses. The chain is Ras-like GTPase YcjX from Shewanella oneidensis (strain ATCC 700550 / JCM 31522 / CIP 106686 / LMG 19005 / NCIMB 14063 / MR-1).